A 999-amino-acid polypeptide reads, in one-letter code: Multiple C2 and transmembrane domain-containing protein 1 (999 aa).

The segment covering 1–19 has biased composition (low complexity); that stretch reads MEPRAAAAGEPEPPAASSS. Positions 1 to 241 are disordered; that stretch reads MEPRAAAAGE…TGEEHGSSQK (241 aa). Residues 34-44 are compositionally biased toward gly residues; that stretch reads RSKGGGGGRAG. Low complexity predominate over residues 65-79; sequence GNAPARGSGAGSRWS. Residues 92-101 show a composition bias toward polar residues; sequence FSSSQPNLCC. Low complexity-rich tracts occupy residues 131–141 and 149–169; these read PAVKGPAAASG and GGRS…LSSS. 2 stretches are compositionally biased toward basic and acidic residues: residues 175–185 and 228–238; these read RGDRARDEGAR and RAPETGEEHGS. C2 domains follow at residues 242 to 360, 452 to 569, and 603 to 724; these read IINT…DVTL, QTQS…KLEL, and QKER…AYVL. 15 residues coordinate Ca(2+): Asp277, Asp283, Asp330, Asp332, Asp338, Asp486, Asp492, Asp539, Asp541, Asp547, Asp642, Asp648, Asp694, Asp696, and Asp702. The next 2 membrane-spanning stretches (helical) occupy residues 811 to 831 and 914 to 934; these read FVLF…LVLL and PFLS…LYCI.

It belongs to the MCTP family. The cofactor is Ca(2+).

It localises to the cytoplasmic vesicle. The protein resides in the secretory vesicle. Its subcellular location is the synaptic vesicle membrane. The protein localises to the recycling endosome. It is found in the endoplasmic reticulum membrane. Its function is as follows. Calcium sensor which is essential for the stabilization of normal baseline neurotransmitter release and for the induction and long-term maintenance of presynaptic homeostatic plasticity. This Homo sapiens (Human) protein is Multiple C2 and transmembrane domain-containing protein 1 (MCTP1).